A 337-amino-acid polypeptide reads, in one-letter code: UDP-3-O-acylglucosamine N-acyltransferase 1 (337 aa).

His-238 acts as the Proton acceptor in catalysis.

This sequence belongs to the transferase hexapeptide repeat family. LpxD subfamily. In terms of assembly, homotrimer.

It catalyses the reaction a UDP-3-O-[(3R)-3-hydroxyacyl]-alpha-D-glucosamine + a (3R)-hydroxyacyl-[ACP] = a UDP-2-N,3-O-bis[(3R)-3-hydroxyacyl]-alpha-D-glucosamine + holo-[ACP] + H(+). It functions in the pathway bacterial outer membrane biogenesis; LPS lipid A biosynthesis. Functionally, catalyzes the N-acylation of UDP-3-O-acylglucosamine using 3-hydroxyacyl-ACP as the acyl donor. Is involved in the biosynthesis of lipid A, a phosphorylated glycolipid that anchors the lipopolysaccharide to the outer membrane of the cell. In Koribacter versatilis (strain Ellin345), this protein is UDP-3-O-acylglucosamine N-acyltransferase 1.